A 93-amino-acid chain; its full sequence is DNA/RNA-binding protein Alba (93 aa).

Lysine 11 carries the N6-acetyllysine modification.

This sequence belongs to the histone-like Alba family. In terms of processing, acetylated. Acetylation at Lys-11 decreases DNA-binding affinity.

It localises to the cytoplasm. Its subcellular location is the chromosome. Its function is as follows. Binds double-stranded DNA tightly but without sequence specificity. Involved in DNA compaction. In Pyrococcus horikoshii (strain ATCC 700860 / DSM 12428 / JCM 9974 / NBRC 100139 / OT-3), this protein is DNA/RNA-binding protein Alba.